The following is a 62-amino-acid chain: Translational regulator CsrA (62 aa).

It belongs to the CsrA/RsmA family. In terms of assembly, homodimer; the beta-strands of each monomer intercalate to form a hydrophobic core, while the alpha-helices form wings that extend away from the core.

It is found in the cytoplasm. Its function is as follows. A key translational regulator that binds mRNA to regulate translation initiation and/or mRNA stability. Mediates global changes in gene expression, shifting from rapid growth to stress survival by linking envelope stress, the stringent response and the catabolite repression systems. Usually binds in the 5'-UTR; binding at or near the Shine-Dalgarno sequence prevents ribosome-binding, repressing translation, binding elsewhere in the 5'-UTR can activate translation and/or stabilize the mRNA. Its function is antagonized by small RNA(s). This Haemophilus ducreyi (strain 35000HP / ATCC 700724) protein is Translational regulator CsrA.